The primary structure comprises 342 residues: Renalase (342 aa).

Positions 1–17 (MSRVLVVGAGLTGSLCA) are cleaved as a signal peptide. FAD-binding positions include threonine 12, arginine 42, and 61–62 (QY).

The protein belongs to the renalase family. The cofactor is FAD. As to expression, expressed predominantly in kidney and testis with lower levels in liver, heart and embryo and weak expression in brain and skeletal muscle.

It is found in the secreted. It catalyses the reaction 1,2-dihydro-beta-NAD + O2 + H(+) = H2O2 + NAD(+). The enzyme catalyses 1,2-dihydro-beta-NADP + O2 + H(+) = H2O2 + NADP(+). It carries out the reaction 1,6-dihydro-beta-NADP + O2 + H(+) = H2O2 + NADP(+). The catalysed reaction is 1,6-dihydro-beta-NAD + O2 + H(+) = H2O2 + NAD(+). Catalyzes the oxidation of the less abundant 1,2-dihydro-beta-NAD(P) and 1,6-dihydro-beta-NAD(P) to form beta-NAD(P)(+). The enzyme hormone is secreted by the kidney, and circulates in blood and modulates cardiac function and systemic blood pressure. Lowers blood pressure in vivo by decreasing cardiac contractility and heart rate and preventing a compensatory increase in peripheral vascular tone, suggesting a causal link to the increased plasma catecholamine and heightened cardiovascular risk. High concentrations of catecholamines activate plasma renalase and promotes its secretion and synthesis. The sequence is that of Renalase from Mus musculus (Mouse).